We begin with the raw amino-acid sequence, 426 residues long: Tol-Pal system protein TolB (426 aa).

An N-terminal signal peptide occupies residues 1–25 (MNAMSRISRRIFLALALSLAGLAQA).

This sequence belongs to the TolB family. As to quaternary structure, the Tol-Pal system is composed of five core proteins: the inner membrane proteins TolA, TolQ and TolR, the periplasmic protein TolB and the outer membrane protein Pal. They form a network linking the inner and outer membranes and the peptidoglycan layer.

The protein localises to the periplasm. Functionally, part of the Tol-Pal system, which plays a role in outer membrane invagination during cell division and is important for maintaining outer membrane integrity. The chain is Tol-Pal system protein TolB from Dechloromonas aromatica (strain RCB).